The sequence spans 89 residues: uncharacterized protein (89 aa).

This is an uncharacterized protein from Bacillus subtilis (strain 168).